A 178-amino-acid chain; its full sequence is Endoribonuclease YbeY (178 aa).

Zn(2+)-binding residues include H118, H122, and H128.

The protein belongs to the endoribonuclease YbeY family. Zn(2+) is required as a cofactor.

The protein resides in the cytoplasm. Its function is as follows. Single strand-specific metallo-endoribonuclease involved in late-stage 70S ribosome quality control and in maturation of the 3' terminus of the 16S rRNA. The sequence is that of Endoribonuclease YbeY from Mycobacterium leprae (strain Br4923).